Here is a 530-residue protein sequence, read N- to C-terminus: UDP-N-acetylmuramoyl-L-alanyl-D-glutamate--2,6-diaminopimelate ligase (530 aa).

S21 serves as a coordination point for UDP-N-acetyl-alpha-D-muramoyl-L-alanyl-D-glutamate. 99 to 105 (GTNGKSS) is a binding site for ATP. Residues 145 to 146 (TT), S172, Q178, and R180 contribute to the UDP-N-acetyl-alpha-D-muramoyl-L-alanyl-D-glutamate site. K212 is modified (N6-carboxylysine). Positions 221–269 (FKPAYREEFKGDTEHSTTAYILVREDASTGSTSKLLLEAKFGKMSTEYL) constitute an RPE1 insert domain. Residues R422, 446 to 449 (DNPR), G496, and E500 contribute to the meso-2,6-diaminopimelate site. The Meso-diaminopimelate recognition motif motif lies at 446–449 (DNPR).

It belongs to the MurCDEF family. MurE subfamily. Mg(2+) is required as a cofactor. In terms of processing, carboxylation is probably crucial for Mg(2+) binding and, consequently, for the gamma-phosphate positioning of ATP.

It is found in the cytoplasm. It catalyses the reaction UDP-N-acetyl-alpha-D-muramoyl-L-alanyl-D-glutamate + meso-2,6-diaminopimelate + ATP = UDP-N-acetyl-alpha-D-muramoyl-L-alanyl-gamma-D-glutamyl-meso-2,6-diaminopimelate + ADP + phosphate + H(+). The protein operates within cell wall biogenesis; peptidoglycan biosynthesis. In terms of biological role, catalyzes the addition of meso-diaminopimelic acid to the nucleotide precursor UDP-N-acetylmuramoyl-L-alanyl-D-glutamate (UMAG) in the biosynthesis of bacterial cell-wall peptidoglycan. The sequence is that of UDP-N-acetylmuramoyl-L-alanyl-D-glutamate--2,6-diaminopimelate ligase from Rickettsia felis (strain ATCC VR-1525 / URRWXCal2) (Rickettsia azadi).